Consider the following 199-residue polypeptide: Probable NADH dehydrogenase [ubiquinone] iron-sulfur protein 7, mitochondrial (199 aa).

Residues Cys-74, Cys-75, Cys-139, and Cys-169 each contribute to the [4Fe-4S] cluster site.

It belongs to the complex I 20 kDa subunit family. In terms of assembly, complex I is composed of 45 different subunits This is a component of the iron-sulfur (IP) fragment of the enzyme. It depends on [4Fe-4S] cluster as a cofactor.

Its subcellular location is the mitochondrion. The catalysed reaction is a ubiquinone + NADH + 5 H(+)(in) = a ubiquinol + NAD(+) + 4 H(+)(out). Its function is as follows. Core subunit of the mitochondrial membrane respiratory chain NADH dehydrogenase (Complex I) that is believed to belong to the minimal assembly required for catalysis. Complex I functions in the transfer of electrons from NADH to the respiratory chain. The immediate electron acceptor for the enzyme is believed to be ubiquinone. This chain is Probable NADH dehydrogenase [ubiquinone] iron-sulfur protein 7, mitochondrial (nduf-7), found in Caenorhabditis elegans.